Reading from the N-terminus, the 1224-residue chain is uncharacterized protein (1224 aa).

6 disordered regions span residues 1–67 (MNQD…SSSI), 111–151 (QQSH…PPPL), 193–270 (QTEL…DPNI), 316–416 (DYNN…TVKK), 430–957 (SDSG…QEEK), and 1078–1167 (SFLP…TSHV). The segment covering 10–48 (SFHSNNNSNSNHHHSYNNSINSGSSSSGSNNSSNNNSFN) has biased composition (low complexity). The segment covering 49-58 (DEIEGGEIQE) has biased composition (acidic residues). 3 stretches are compositionally biased toward low complexity: residues 126–140 (SSSS…SSSS), 193–212 (QTEL…SSPP), and 228–241 (SAPT…SVSS). Polar residues predominate over residues 242 to 255 (LTQPQKPKSVQYSQ). The segment covering 260–270 (EIREEKVDPNI) has biased composition (basic and acidic residues). Over residues 316–338 (DYNNSNSNNSNNNNNNNNSITEN) the composition is skewed to low complexity. Polar residues predominate over residues 341-353 (DKMINNQPSSTNS). 2 stretches are compositionally biased toward low complexity: residues 379–413 (TTTT…TTPT) and 430–450 (SDSG…TSTP). Basic and acidic residues-rich tracts occupy residues 451 to 585 (KSKD…DKKK) and 630 to 646 (EIDK…KVES). Residues 662–719 (TTTTTTSTSSSSSLPSLSSSSSSLPLPSSSSSSSSSSSSSSSSSSSSSSSSSSSTTST) show a composition bias toward low complexity. The segment covering 727–750 (PPPPPQQPPPPPPQQPPPPPPPIN) has biased composition (pro residues). The span at 755 to 892 (SEHDKKIIEK…SDRDRDRKDS (138 aa)) shows a compositional bias: basic and acidic residues. Over residues 893-933 (NSNNNSNNNNNNNNNNNNNNNNNNNNKKDNNNNNNNNNNNN) the composition is skewed to low complexity. Over residues 948-957 (TPKKTKQEEK) the composition is skewed to basic and acidic residues. Residues 950-991 (KKTKQEEKLIRSQIDQIKEDAKDLKKLAKELQSKNQNECLEM) adopt a coiled-coil conformation. 2 stretches are compositionally biased toward low complexity: residues 1078-1108 (SFLP…TAPL) and 1114-1165 (NPSE…PNTS).

This is an uncharacterized protein from Dictyostelium discoideum (Social amoeba).